Reading from the N-terminus, the 266-residue chain is Undecaprenyl-diphosphatase (266 aa).

The next 7 membrane-spanning stretches (helical) occupy residues 39 to 59, 86 to 106, 112 to 132, 147 to 167, 189 to 209, 216 to 236, and 246 to 266; these read PGAS…AYYF, SIFI…IFIP, VLRS…FMYL, NFSN…PGVS, FSFL…FVSS, LGFF…LLAI, and NGLK…LLNL.

Belongs to the UppP family.

The protein resides in the cell inner membrane. The enzyme catalyses di-trans,octa-cis-undecaprenyl diphosphate + H2O = di-trans,octa-cis-undecaprenyl phosphate + phosphate + H(+). Its function is as follows. Catalyzes the dephosphorylation of undecaprenyl diphosphate (UPP). Confers resistance to bacitracin. The protein is Undecaprenyl-diphosphatase of Prochlorococcus marinus (strain MIT 9301).